Reading from the N-terminus, the 118-residue chain is NADH-ubiquinone oxidoreductase chain 3 (118 aa).

3 helical membrane-spanning segments follow: residues tyrosine 5 to leucine 25, leucine 62 to isoleucine 82, and glycine 87 to isoleucine 107.

This sequence belongs to the complex I subunit 3 family.

The protein resides in the mitochondrion membrane. It carries out the reaction a ubiquinone + NADH + 5 H(+)(in) = a ubiquinol + NAD(+) + 4 H(+)(out). Functionally, core subunit of the mitochondrial membrane respiratory chain NADH dehydrogenase (Complex I) that is believed to belong to the minimal assembly required for catalysis. Complex I functions in the transfer of electrons from NADH to the respiratory chain. The immediate electron acceptor for the enzyme is believed to be ubiquinone. The protein is NADH-ubiquinone oxidoreductase chain 3 (ND3) of Acanthamoeba castellanii (Amoeba).